We begin with the raw amino-acid sequence, 119 residues long: Large ribosomal subunit protein uL24 (119 aa).

This sequence belongs to the universal ribosomal protein uL24 family. In terms of assembly, part of the 50S ribosomal subunit.

Its function is as follows. One of two assembly initiator proteins, it binds directly to the 5'-end of the 23S rRNA, where it nucleates assembly of the 50S subunit. Functionally, one of the proteins that surrounds the polypeptide exit tunnel on the outside of the subunit. The chain is Large ribosomal subunit protein uL24 from Paenarthrobacter aurescens (strain TC1).